The sequence spans 874 residues: Alanine--tRNA ligase (874 aa).

Zn(2+)-binding residues include H562, H566, C664, and H668.

The protein belongs to the class-II aminoacyl-tRNA synthetase family. Zn(2+) serves as cofactor.

Its subcellular location is the cytoplasm. It carries out the reaction tRNA(Ala) + L-alanine + ATP = L-alanyl-tRNA(Ala) + AMP + diphosphate. Functionally, catalyzes the attachment of alanine to tRNA(Ala) in a two-step reaction: alanine is first activated by ATP to form Ala-AMP and then transferred to the acceptor end of tRNA(Ala). Also edits incorrectly charged Ser-tRNA(Ala) and Gly-tRNA(Ala) via its editing domain. The protein is Alanine--tRNA ligase of Shewanella denitrificans (strain OS217 / ATCC BAA-1090 / DSM 15013).